Here is a 460-residue protein sequence, read N- to C-terminus: Serine--tRNA ligase (460 aa).

Residues 50 to 65 (DRNEVSSKIGELKQAG) show a composition bias toward basic and acidic residues. Disordered stretches follow at residues 50–71 (DRNE…DAAQ) and 109–129 (PDED…RREG). Acidic residues predominate over residues 109-121 (PDEDAPVGDSEAE). 241-243 (TAE) contributes to the L-serine binding site. Residues 272 to 274 (RRE) and valine 288 each bind ATP. Position 295 (glutamate 295) interacts with L-serine. Residue 368–371 (EVSS) coordinates ATP. Serine 404 contributes to the L-serine binding site.

Belongs to the class-II aminoacyl-tRNA synthetase family. Type-1 seryl-tRNA synthetase subfamily. In terms of assembly, homodimer. The tRNA molecule binds across the dimer.

It is found in the cytoplasm. It carries out the reaction tRNA(Ser) + L-serine + ATP = L-seryl-tRNA(Ser) + AMP + diphosphate + H(+). The enzyme catalyses tRNA(Sec) + L-serine + ATP = L-seryl-tRNA(Sec) + AMP + diphosphate + H(+). It participates in aminoacyl-tRNA biosynthesis; selenocysteinyl-tRNA(Sec) biosynthesis; L-seryl-tRNA(Sec) from L-serine and tRNA(Sec): step 1/1. Functionally, catalyzes the attachment of serine to tRNA(Ser). Is also able to aminoacylate tRNA(Sec) with serine, to form the misacylated tRNA L-seryl-tRNA(Sec), which will be further converted into selenocysteinyl-tRNA(Sec). This chain is Serine--tRNA ligase, found in Halobacterium salinarum (strain ATCC 29341 / DSM 671 / R1).